We begin with the raw amino-acid sequence, 86 residues long: Anti-adapter protein IraP (86 aa).

Residues 1-38 (MKNLIAELLVKLAQKEEEAKELTVQVEALEIVVTALLR) are a coiled coil.

This sequence belongs to the IraP family. As to quaternary structure, interacts with RssB.

The protein resides in the cytoplasm. Functionally, inhibits RpoS proteolysis by regulating RssB activity, thereby increasing the stability of the sigma stress factor RpoS especially during phosphate starvation, but also in stationary phase and during nitrogen starvation. Its effect on RpoS stability is due to its interaction with RssB, which probably blocks the interaction of RssB with RpoS, and the consequent delivery of the RssB-RpoS complex to the ClpXP protein degradation pathway. The chain is Anti-adapter protein IraP from Klebsiella pneumoniae (strain 342).